The primary structure comprises 190 residues: PBP1-interacting protein LSM12 (190 aa).

One can recognise a Sm domain in the interval 2-69; the sequence is PVCNNDSQLI…IKEVTALRDN (68 aa). Residues 84–190 enclose the AD domain; that stretch reads PSMQAARDRS…ERVQKTLSKK (107 aa).

Belongs to the LSM12 family. In terms of assembly, forms a complex composed of at least MKT1, PBP1, XAC1 and LSM12. Forms a complex composed of at least MKT1L, PBP1, XAC1 and LSM12. Within the complex, interacts with PBP1; the interaction is direct.

Functionally, involved in post-transcriptional regulation of gene expression. In Trypanosoma brucei brucei (strain 927/4 GUTat10.1), this protein is PBP1-interacting protein LSM12.